Consider the following 441-residue polypeptide: pH-response regulator protein palC (441 aa).

The region spanning 3–352 is the BRO1 domain; sequence ISYTGQLPTT…GAAYAAILQL (350 aa). 2 disordered regions span residues 278–304 and 414–441; these read RKDD…TSSG and KWTP…GSYY.

This sequence belongs to the palC family.

Its function is as follows. Required for the proteolytic cleavage of the transcription factor RIM101 in response to alkaline ambient pH. This Yarrowia lipolytica (strain CLIB 122 / E 150) (Yeast) protein is pH-response regulator protein palC.